The chain runs to 190 residues: Apolipoprotein M (190 aa).

The first 17 residues, 1–17, serve as a signal peptide directing secretion; that stretch reads MFHQVWAALLYLYGLLF. 3 disulfides stabilise this stretch: Cys23-Cys169, Cys95-Cys185, and Cys130-Cys159. Residues Glu138 and Arg145 each coordinate tetradecanoate.

Belongs to the calycin superfamily. Lipocalin family. Highly divergent. As to quaternary structure, interacts with LRP2; LRP2 mediates APOM renal uptake and subsequent lysosomal degradation. As to expression, expressed by the liver; secreted in plasma.

Its subcellular location is the secreted. Probably involved in lipid transport. Can bind sphingosine-1-phosphate, myristic acid, palmitic acid and stearic acid, retinol, all-trans-retinoic acid and 9-cis-retinoic acid. In Rattus norvegicus (Rat), this protein is Apolipoprotein M (Apom).